A 421-amino-acid polypeptide reads, in one-letter code: ATP-dependent RNA helicase RhlB (421 aa).

A Q motif motif is present at residues 9-37 (QKFSDFALHPKVVEALEKKGFHNCTPIQA). The Helicase ATP-binding domain maps to 40-219 (LPLTLAGRDV…FEQMNNAEYI (180 aa)). 53–60 (AQTGTGKT) contributes to the ATP binding site. The DEAD box motif lies at 165-168 (DEAD). Positions 245–390 (RLLQTLIEEE…VSKYNPDALM (146 aa)) constitute a Helicase C-terminal domain. Positions 395-421 (KPLRLTRARTGNGPRRTGAPRNRRRSG) are disordered. Residues 402-414 (ARTGNGPRRTGAP) show a composition bias toward low complexity.

The protein belongs to the DEAD box helicase family. RhlB subfamily. In terms of assembly, component of the RNA degradosome, which is a multiprotein complex involved in RNA processing and mRNA degradation.

The protein localises to the cytoplasm. It catalyses the reaction ATP + H2O = ADP + phosphate + H(+). DEAD-box RNA helicase involved in RNA degradation. Has RNA-dependent ATPase activity and unwinds double-stranded RNA. This is ATP-dependent RNA helicase RhlB from Shigella flexneri serotype 5b (strain 8401).